Here is a 53-residue protein sequence, read N- to C-terminus: UPF0391 membrane protein msr4317 (53 aa).

Helical transmembrane passes span 4–24 (WIII…PALA) and 33–53 (ILIG…FAVT).

This sequence belongs to the UPF0391 family.

It is found in the cell membrane. The polypeptide is UPF0391 membrane protein msr4317 (Mesorhizobium japonicum (strain LMG 29417 / CECT 9101 / MAFF 303099) (Mesorhizobium loti (strain MAFF 303099))).